We begin with the raw amino-acid sequence, 186 residues long: Nucleoside triphosphate pyrophosphatase (186 aa).

The active-site Proton acceptor is D68.

Belongs to the Maf family. A divalent metal cation is required as a cofactor.

It localises to the cytoplasm. It carries out the reaction a ribonucleoside 5'-triphosphate + H2O = a ribonucleoside 5'-phosphate + diphosphate + H(+). The catalysed reaction is a 2'-deoxyribonucleoside 5'-triphosphate + H2O = a 2'-deoxyribonucleoside 5'-phosphate + diphosphate + H(+). Functionally, nucleoside triphosphate pyrophosphatase. May have a dual role in cell division arrest and in preventing the incorporation of modified nucleotides into cellular nucleic acids. This Prochlorococcus marinus (strain MIT 9303) protein is Nucleoside triphosphate pyrophosphatase.